A 465-amino-acid chain; its full sequence is Kinesin-like protein KIN-1 (465 aa).

One can recognise a Kinesin motor domain in the interval 3 to 334 (NVTVCARFRP…LRFGMRAKHI (332 aa)). 87–94 (GQTGAGKT) contributes to the ATP binding site. Residues 338-358 (PRASEVKSAKAQEEPSSVTKD) are disordered. Residues 341–358 (SEVKSAKAQEEPSSVTKD) show a composition bias toward basic and acidic residues. Residues 402 to 444 (VYEDIVSKTIQSLQQAVDELQQKVKKLEAENIGIQEQALRNHE) are a coiled coil.

This sequence belongs to the TRAFAC class myosin-kinesin ATPase superfamily. Kinesin family. KIN-1 subfamily. In terms of assembly, homodimer. Interacts with WIP1 and WIP2. As to expression, specifically expressed in ovules and anthers.

In terms of biological role, kinesin-like motor protein that promotes synapsis and is required for proper crossover distribution in meiosis. Plays a role in the nuclear division cycles during megagametogenesis. The sequence is that of Kinesin-like protein KIN-1 from Arabidopsis thaliana (Mouse-ear cress).